The sequence spans 636 residues: 1-deoxy-D-xylulose-5-phosphate synthase (636 aa).

Thiamine diphosphate-binding positions include histidine 84 and 125 to 127; that span reads GHS. Aspartate 156 is a Mg(2+) binding site. Residues 157–158, asparagine 185, phenylalanine 292, and glutamate 375 each bind thiamine diphosphate; that span reads GA. Asparagine 185 contributes to the Mg(2+) binding site.

The protein belongs to the transketolase family. DXPS subfamily. As to quaternary structure, homodimer. Mg(2+) is required as a cofactor. It depends on thiamine diphosphate as a cofactor.

It catalyses the reaction D-glyceraldehyde 3-phosphate + pyruvate + H(+) = 1-deoxy-D-xylulose 5-phosphate + CO2. It participates in metabolic intermediate biosynthesis; 1-deoxy-D-xylulose 5-phosphate biosynthesis; 1-deoxy-D-xylulose 5-phosphate from D-glyceraldehyde 3-phosphate and pyruvate: step 1/1. Its function is as follows. Catalyzes the acyloin condensation reaction between C atoms 2 and 3 of pyruvate and glyceraldehyde 3-phosphate to yield 1-deoxy-D-xylulose-5-phosphate (DXP). The chain is 1-deoxy-D-xylulose-5-phosphate synthase from Cellvibrio japonicus (strain Ueda107) (Pseudomonas fluorescens subsp. cellulosa).